Consider the following 602-residue polypeptide: T-cell surface protein tactile (602 aa).

Residues 1–21 (MGRKWTYCVVYTIIQIQFFRG) form the signal peptide. Residues 22 to 536 (VWEELFNVGD…IIVNQPSDGM (515 aa)) lie on the Extracellular side of the membrane. Ig-like V-type domains are found at residues 24-134 (EELF…VYNL) and 138-244 (PYTQ…STTV). Residues asparagine 42, asparagine 100, asparagine 107, asparagine 145, asparagine 153, asparagine 163, asparagine 195, asparagine 196, asparagine 258, asparagine 281, asparagine 306, asparagine 330, asparagine 348, asparagine 415, asparagine 436, and asparagine 514 are each glycosylated (N-linked (GlcNAc...) asparagine). An intrachain disulfide couples cysteine 45 to cysteine 118. Cysteine 160 and cysteine 228 are oxidised to a cystine. The Ig-like C2-type domain occupies 250–355 (PEILMTVENS…MWNTSSQPIT (106 aa)). Cysteine 271 and cysteine 335 are oxidised to a cystine. A disordered region spans residues 402 to 478 (ENGLTPDATP…PQEPDSPVSW (77 aa)). Polar residues predominate over residues 409 to 433 (ATPQTSNSSMTTKDGNYLEASSGTD). The segment covering 434–448 (AKNSSRAAASSKSGS) has biased composition (low complexity). The helical transmembrane segment at 537–557 (SWPVLVAALLFFCTLLFGLGV) threads the bilayer. The Cytoplasmic segment spans residues 558-602 (RKWYRYQNEIMERPPPFKPPPPPIKYTYIQEPIGCDLCCHEMEVL).

As to quaternary structure, homodimer; disulfide-linked. Interacts with PVR.

The protein localises to the membrane. In terms of biological role, may be involved in adhesive interactions of activated T and NK cells during the late phase of the immune response. Promotes NK cell-target adhesion by interacting with PVR present on target cells. May function at a time after T and NK cells have penetrated the endothelium using integrins and selectins, when they are actively engaging diseased cells and moving within areas of inflammation. This Mus musculus (Mouse) protein is T-cell surface protein tactile (Cd96).